Consider the following 166-residue polypeptide: MSNAIDTKKVVVDEITSKFKDSMSTVIVDYRGLSVSEVTELRKQLRDAGVEFKVYKNTLTRRAVEQVELTGLNDFLTGPNAIAFSNEDVIAPAKIINEFAKSHEALEIKAGVIEGNVATVEEVKALAELPSREGLLSMLLSVLQAPVRNLALATKAVADQKEEQGA.

Belongs to the universal ribosomal protein uL10 family. As to quaternary structure, part of the ribosomal stalk of the 50S ribosomal subunit. The N-terminus interacts with L11 and the large rRNA to form the base of the stalk. The C-terminus forms an elongated spine to which L12 dimers bind in a sequential fashion forming a multimeric L10(L12)X complex.

Its function is as follows. Forms part of the ribosomal stalk, playing a central role in the interaction of the ribosome with GTP-bound translation factors. This is Large ribosomal subunit protein uL10 from Bacillus pumilus (strain SAFR-032).